The chain runs to 402 residues: Phosphoglycerate kinase (402 aa).

Residues D24–N26, R40, H63–R66, R122, and R155 contribute to the substrate site. ATP-binding positions include K206, G297, E328, and G358 to S361.

The protein belongs to the phosphoglycerate kinase family. Monomer.

The protein localises to the cytoplasm. It carries out the reaction (2R)-3-phosphoglycerate + ATP = (2R)-3-phospho-glyceroyl phosphate + ADP. The protein operates within carbohydrate degradation; glycolysis; pyruvate from D-glyceraldehyde 3-phosphate: step 2/5. The polypeptide is Phosphoglycerate kinase (Prochlorococcus marinus (strain MIT 9301)).